The primary structure comprises 497 residues: Cysteine--tRNA ligase (497 aa).

Residue C32 participates in Zn(2+) binding. The short motif at 34-44 is the 'HIGH' region element; it reads PTVYGEGHLGH. Residues C228, H253, and E257 each coordinate Zn(2+). The short motif at 285–289 is the 'KMSKS' region element; it reads KMGKS. K288 is an ATP binding site.

The protein belongs to the class-I aminoacyl-tRNA synthetase family. Monomer. Zn(2+) is required as a cofactor.

It localises to the cytoplasm. It carries out the reaction tRNA(Cys) + L-cysteine + ATP = L-cysteinyl-tRNA(Cys) + AMP + diphosphate. The chain is Cysteine--tRNA ligase from Cytophaga hutchinsonii (strain ATCC 33406 / DSM 1761 / CIP 103989 / NBRC 15051 / NCIMB 9469 / D465).